Reading from the N-terminus, the 665-residue chain is UvrABC system protein B (665 aa).

A Helicase ATP-binding domain is found at 25–176; it reads NSIEKGNRFQ…NQRQLLRDLV (152 aa). Position 38 to 45 (38 to 45) interacts with ATP; the sequence is GATGTGKT. The Beta-hairpin motif lies at 91–114; the sequence is YYDYYQPEAYIPVSDTYIEKSASI. Residues 429 to 595 enclose the Helicase C-terminal domain; sequence QVDDLLGEIK…PIVTRSSNAI (167 aa). A UVR domain is found at 626 to 661; the sequence is PELIGQLEEQMKEAAKKLEFEEAAKYRDRIQHLRDK.

Belongs to the UvrB family. In terms of assembly, forms a heterotetramer with UvrA during the search for lesions. Interacts with UvrC in an incision complex.

It is found in the cytoplasm. The UvrABC repair system catalyzes the recognition and processing of DNA lesions. A damage recognition complex composed of 2 UvrA and 2 UvrB subunits scans DNA for abnormalities. Upon binding of the UvrA(2)B(2) complex to a putative damaged site, the DNA wraps around one UvrB monomer. DNA wrap is dependent on ATP binding by UvrB and probably causes local melting of the DNA helix, facilitating insertion of UvrB beta-hairpin between the DNA strands. Then UvrB probes one DNA strand for the presence of a lesion. If a lesion is found the UvrA subunits dissociate and the UvrB-DNA preincision complex is formed. This complex is subsequently bound by UvrC and the second UvrB is released. If no lesion is found, the DNA wraps around the other UvrB subunit that will check the other stand for damage. The sequence is that of UvrABC system protein B from Gloeothece citriformis (strain PCC 7424) (Cyanothece sp. (strain PCC 7424)).